We begin with the raw amino-acid sequence, 198 residues long: MTAQNENAQAQAEQVEVANEAQLEQTAEVQQEQPVEAELAAAYARINELETYVAEADNREKDIQLRAQAEIQNIRRRAEQDIEKAHKFALEKFSKELLTVVDNLERGLNALDTAVTDEKTQALVDGVEMTHKEFISTLAKFGVEAVGVVGEAFNPEVHEAISMQPAEGIEANHISVVLQKGYTLQGRVLRPAMVMVAG.

This sequence belongs to the GrpE family. As to quaternary structure, homodimer.

It localises to the cytoplasm. In terms of biological role, participates actively in the response to hyperosmotic and heat shock by preventing the aggregation of stress-denatured proteins, in association with DnaK and GrpE. It is the nucleotide exchange factor for DnaK and may function as a thermosensor. Unfolded proteins bind initially to DnaJ; upon interaction with the DnaJ-bound protein, DnaK hydrolyzes its bound ATP, resulting in the formation of a stable complex. GrpE releases ADP from DnaK; ATP binding to DnaK triggers the release of the substrate protein, thus completing the reaction cycle. Several rounds of ATP-dependent interactions between DnaJ, DnaK and GrpE are required for fully efficient folding. This is Protein GrpE from Actinobacillus pleuropneumoniae serotype 7 (strain AP76).